An 88-amino-acid polypeptide reads, in one-letter code: Large ribosomal subunit protein eL37 (88 aa).

Residues Cys-17, Cys-20, Cys-32, and Cys-35 each coordinate Zn(2+). Residues 17–35 form a C4-type zinc finger; sequence CNRCGRRSFHVQKKTCSSC.

It belongs to the eukaryotic ribosomal protein eL37 family. Zn(2+) serves as cofactor.

Binds to the 23S rRNA. This is Large ribosomal subunit protein eL37 (RPL37) from Candida albicans (Yeast).